A 120-amino-acid polypeptide reads, in one-letter code: MFLLYEYDIFWAFLIISSAIPVLAFFISGVLSPIRKGPEKLSSYESGIEPIGDAWLQFRIRYYMFALVFVVFDVETVFLYPWAMSFDVLGVSAFIEAFIFVLILILGLVYAWRKGALEWS.

A run of 3 helical transmembrane segments spans residues 9–29, 64–84, and 88–108; these read IFWA…FISG, MFAL…PWAM, and VLGV…ILGL.

Belongs to the complex I subunit 3 family. In terms of assembly, NDH is composed of at least 16 different subunits, 5 of which are encoded in the nucleus.

It is found in the plastid. The protein localises to the chloroplast thylakoid membrane. It carries out the reaction a plastoquinone + NADH + (n+1) H(+)(in) = a plastoquinol + NAD(+) + n H(+)(out). The enzyme catalyses a plastoquinone + NADPH + (n+1) H(+)(in) = a plastoquinol + NADP(+) + n H(+)(out). Functionally, NDH shuttles electrons from NAD(P)H:plastoquinone, via FMN and iron-sulfur (Fe-S) centers, to quinones in the photosynthetic chain and possibly in a chloroplast respiratory chain. The immediate electron acceptor for the enzyme in this species is believed to be plastoquinone. Couples the redox reaction to proton translocation, and thus conserves the redox energy in a proton gradient. The polypeptide is NAD(P)H-quinone oxidoreductase subunit 3, chloroplastic (Barbarea verna (Land cress)).